Here is a 119-residue protein sequence, read N- to C-terminus: NADH-quinone oxidoreductase subunit A (119 aa).

A run of 3 helical transmembrane segments spans residues 7–27, 63–83, and 88–108; these read FPVL…MFLG, LIAI…PWGV, and IGWL…VGFV.

It belongs to the complex I subunit 3 family. NDH-1 is composed of 14 different subunits. Subunits NuoA, H, J, K, L, M, N constitute the membrane sector of the complex.

The protein resides in the cell inner membrane. It catalyses the reaction a quinone + NADH + 5 H(+)(in) = a quinol + NAD(+) + 4 H(+)(out). NDH-1 shuttles electrons from NADH, via FMN and iron-sulfur (Fe-S) centers, to quinones in the respiratory chain. The immediate electron acceptor for the enzyme in this species is believed to be ubiquinone. Couples the redox reaction to proton translocation (for every two electrons transferred, four hydrogen ions are translocated across the cytoplasmic membrane), and thus conserves the redox energy in a proton gradient. In Polynucleobacter necessarius subsp. necessarius (strain STIR1), this protein is NADH-quinone oxidoreductase subunit A.